The chain runs to 299 residues: DNA-binding transcriptional repressor CapW (299 aa).

Residues 1–15 (MPDNFREGDKQDSQK) show a composition bias toward basic and acidic residues. The tract at residues 1-21 (MPDNFREGDKQDSQKGRQGAR) is disordered. The winged HTH domain stretch occupies residues 1-95 (MPDNFREGDK…LFQPVYMTSS (95 aa)). Residues 96–207 (LECYLNDLLQ…LSRIVQAQNA (112 aa)) are WYL domain. A WYL domain is found at 131-211 (LRRLDTDVVS…VQAQNAGPDE (81 aa)). The tract at residues 156–200 (YQSMSDPQGSKRTLTPHSLVHDGYRWHTRAWCHKRGEYRDFLLSR) is probable ligand-binding region. A WCX domain region spans residues 208 to 299 (GPDEERANGD…KDEIYALLKQ (92 aa)).

Homodimer.

Functionally, transcriptional regulator of a CBASS antivirus system. CBASS (cyclic oligonucleotide-based antiphage signaling system) provides immunity against bacteriophage. The CD-NTase protein synthesizes cyclic nucleotides in response to infection; these serve as specific second messenger signals. The signals activate a diverse range of effectors, leading to bacterial cell death and thus abortive phage infection. A type III CBASS system. Expression of this CBASS system (Cap18-Cap6-Cap7-CdnC-CapW-Cap17) in a susceptible E.coli (strain MG1655) confers resistance to bacteriophage P1. Binds specifically to and represses expression from the CBASS promoter, found between the genes for divergently transcribed capW and cdnC. This chain is DNA-binding transcriptional repressor CapW, found in Escherichia coli (strain KTE188).